The following is a 64-amino-acid chain: Protein sigN173 (64 aa).

This chain is Protein sigN173, found in Dictyostelium discoideum (Social amoeba).